The following is a 212-amino-acid chain: Uridine kinase (212 aa).

13-20 (GGSGSGKT) contributes to the ATP binding site.

It belongs to the uridine kinase family.

The protein resides in the cytoplasm. It carries out the reaction uridine + ATP = UMP + ADP + H(+). It catalyses the reaction cytidine + ATP = CMP + ADP + H(+). The protein operates within pyrimidine metabolism; CTP biosynthesis via salvage pathway; CTP from cytidine: step 1/3. It functions in the pathway pyrimidine metabolism; UMP biosynthesis via salvage pathway; UMP from uridine: step 1/1. This Bacillus cereus (strain B4264) protein is Uridine kinase.